A 344-amino-acid chain; its full sequence is GLIPR1-like protein 2 (344 aa).

In terms of domain architecture, SCP spans valine 58 to tyrosine 192. The helical transmembrane segment at threonine 254–valine 274 threads the bilayer. Acidic residues-rich tracts occupy residues glutamate 292–glutamate 304 and glutamate 312–threonine 334. Residues glutamate 292–lysine 344 are disordered. A compositionally biased stretch (basic and acidic residues) spans glutamine 335–lysine 344.

This sequence belongs to the CRISP family. Highly expressed in testis. Detected in prostate, kidney, bladder, lung and bone marrow.

It is found in the membrane. This is GLIPR1-like protein 2 (GLIPR1L2) from Homo sapiens (Human).